The sequence spans 258 residues: 5'-nucleotidase SurE (258 aa).

A divalent metal cation is bound by residues Asp14, Asp15, Ser45, and Asn101.

This sequence belongs to the SurE nucleotidase family. It depends on a divalent metal cation as a cofactor.

The protein resides in the cytoplasm. The enzyme catalyses a ribonucleoside 5'-phosphate + H2O = a ribonucleoside + phosphate. Functionally, nucleotidase that shows phosphatase activity on nucleoside 5'-monophosphates. This chain is 5'-nucleotidase SurE, found in Chlorobium limicola (strain DSM 245 / NBRC 103803 / 6330).